We begin with the raw amino-acid sequence, 187 residues long: MRLVLLGPPGSGKGTQAARLKDTFQIPHISTGDLLRAEVAAGSPLGLKAKEVMARGDLVSDEILLGMLEARLGQADVANGFILDGYPRNVAQANALDSLLSKIGQPLDAVVQLDVASELLVERIAGRAKAEGREDDNPESVRKRLQVYTDSTAPVIGFYEQRGKLARVDGVGSLDEVLERIGQALGR.

ATP is bound at residue 10-15; sequence GSGKGT. Residues 30–59 are NMP; it reads STGDLLRAEVAAGSPLGLKAKEVMARGDLV. AMP contacts are provided by residues Thr-31, Arg-36, 57 to 59, 85 to 88, and Gln-92; these read DLV and GYPR. The tract at residues 126-136 is LID; it reads GRAKAEGREDD. Arg-127 is an ATP binding site. 2 residues coordinate AMP: Arg-133 and Arg-144. Gly-172 serves as a coordination point for ATP.

It belongs to the adenylate kinase family. In terms of assembly, monomer.

The protein localises to the cytoplasm. The catalysed reaction is AMP + ATP = 2 ADP. Its pathway is purine metabolism; AMP biosynthesis via salvage pathway; AMP from ADP: step 1/1. Functionally, catalyzes the reversible transfer of the terminal phosphate group between ATP and AMP. Plays an important role in cellular energy homeostasis and in adenine nucleotide metabolism. The chain is Adenylate kinase from Xanthomonas campestris pv. campestris (strain 8004).